The sequence spans 223 residues: Retbindin (223 aa).

Residues M1–G30 form the signal peptide. Intrachain disulfides connect C73–C143, C80–C120, C113–C157, and C126–C139.

The protein belongs to the folate receptor family. Post-translationally, not N-glycosylated.

The protein resides in the secreted. It is found in the extracellular space. It localises to the extracellular matrix. The protein localises to the interphotoreceptor matrix. Its subcellular location is the cell membrane. Riboflavin-binding protein which might have a role in retinal flavin transport. The polypeptide is Retbindin (RTBDN) (Canis lupus familiaris (Dog)).